Here is a 493-residue protein sequence, read N- to C-terminus: Glycerol kinase (493 aa).

T13 contacts ADP. Residues T13, T14, and S15 each contribute to the ATP site. T13 is a sn-glycerol 3-phosphate binding site. Position 17 (R17) interacts with ADP. Sn-glycerol 3-phosphate is bound by residues R83, E84, Y135, and D244. Glycerol contacts are provided by R83, E84, Y135, D244, and Q245. T266 and G309 together coordinate ADP. ATP contacts are provided by T266, G309, Q313, and G410. Residues G410 and N414 each coordinate ADP.

This sequence belongs to the FGGY kinase family.

The enzyme catalyses glycerol + ATP = sn-glycerol 3-phosphate + ADP + H(+). It functions in the pathway polyol metabolism; glycerol degradation via glycerol kinase pathway; sn-glycerol 3-phosphate from glycerol: step 1/1. With respect to regulation, inhibited by fructose 1,6-bisphosphate (FBP). Functionally, key enzyme in the regulation of glycerol uptake and metabolism. Catalyzes the phosphorylation of glycerol to yield sn-glycerol 3-phosphate. This is Glycerol kinase from Shewanella piezotolerans (strain WP3 / JCM 13877).